The sequence spans 547 residues: MNSKRDRFEKQLLIKNVFESKQLFLTILRFTVPTFFFALFSAAYVFIDQIMVIKFVPRSELNPDSIFTDQSLIDEFKNSAFYKSDSFLSSGLNIKQFIKTVLNISQPLIVLLNAINIFIPLGTGVIFSKAIGRNDQNKIQEAWNTGLISTTVFGLITQFLVLSFAKEWLHYNLDQSSFEQNFQANSFQQFFNKKAIDVASEYVYILIGLNIIPMLSRLFFYLAQSEGRQLFIAIVPPIANLINILIVFLLVRYSSLGVIGSAVAGILGYLINFLAYIIYLIYLNKRNLTYLTFKTIKLNKIDFNLLVVVSLIGMASFFRNGSLSIVTTFYESFLVNLTKATTDKNDVFYLTLLTGPIAISNLASAAIFGLLQGVRTVSSYKFGQKKYDEIKKINIYTVIICISFGSLIYLLTAVAFGKQILSSFFDVSDQNLDLANYFSLIVQAQVFFVATGANSQQYFQNTNRVLYSWIVSLTHGLFVFIPLLFIFQAITLQTNNIEVFIWLLTANAALAGLINIAFGQIHTNLFMDKYFANPPQNKLVKFIEKYS.

Helical transmembrane passes span 33-53 (PTFFFALFSAAYVFIDQIMVI), 107-127 (PLIVLLNAINIFIPLGTGVIF), 145-165 (TGLISTTVFGLITQFLVLSFA), 203-223 (VYILIGLNIIPMLSRLFFYLA), 231-251 (FIAIVPPIANLINILIVFLLV), 263-283 (VAGILGYLINFLAYIIYLIYL), 298-318 (LNKIDFNLLVVVSLIGMASFF), 351-371 (TLLTGPIAISNLASAAIFGLL), 397-417 (TVIICISFGSLIYLLTAVAFG), 432-452 (LDLANYFSLIVQAQVFFVATG), 470-490 (IVSLTHGLFVFIPLLFIFQAI), and 499-519 (VFIWLLTANAALAGLINIAFG).

Its subcellular location is the cell membrane. This is an uncharacterized protein from Mycoplasma genitalium (strain ATCC 33530 / DSM 19775 / NCTC 10195 / G37) (Mycoplasmoides genitalium).